Consider the following 142-residue polypeptide: Small ribosomal subunit protein bS18c (142 aa).

The interval 1-21 (MDRITGPFRKSKKSFRKPLPP) is disordered.

Belongs to the bacterial ribosomal protein bS18 family. Part of the 30S ribosomal subunit.

It is found in the plastid. This Cuscuta gronovii (Common dodder) protein is Small ribosomal subunit protein bS18c.